Consider the following 247-residue polypeptide: Flagellar brake protein YcgR 2 (247 aa).

The PilZ domain occupies 124-237 (QRREYFRVET…DETRIQRYIA (114 aa)).

It belongs to the YcgR family. Monomer. Interacts with the flagellar basal bodies.

It is found in the bacterial flagellum basal body. Acts as a flagellar brake, regulating swimming and swarming in a bis-(3'-5') cyclic diguanylic acid (c-di-GMP)-dependent manner. Binds 1 c-di-GMP dimer per subunit. Increasing levels of c-di-GMP lead to decreased motility. This chain is Flagellar brake protein YcgR 2, found in Dechloromonas aromatica (strain RCB).